The primary structure comprises 502 residues: Probable cytosol aminopeptidase (502 aa).

2 residues coordinate Mn(2+): lysine 269 and aspartate 274. Lysine 281 is an active-site residue. 3 residues coordinate Mn(2+): aspartate 292, aspartate 351, and glutamate 353. Arginine 355 is a catalytic residue.

Belongs to the peptidase M17 family. The cofactor is Mn(2+).

It is found in the cytoplasm. The enzyme catalyses Release of an N-terminal amino acid, Xaa-|-Yaa-, in which Xaa is preferably Leu, but may be other amino acids including Pro although not Arg or Lys, and Yaa may be Pro. Amino acid amides and methyl esters are also readily hydrolyzed, but rates on arylamides are exceedingly low.. It catalyses the reaction Release of an N-terminal amino acid, preferentially leucine, but not glutamic or aspartic acids.. Presumably involved in the processing and regular turnover of intracellular proteins. Catalyzes the removal of unsubstituted N-terminal amino acids from various peptides. The protein is Probable cytosol aminopeptidase of Vibrio campbellii (strain ATCC BAA-1116).